The sequence spans 123 residues: Large ribosomal subunit protein bL12 (123 aa).

It belongs to the bacterial ribosomal protein bL12 family. Homodimer. Part of the ribosomal stalk of the 50S ribosomal subunit. Forms a multimeric L10(L12)X complex, where L10 forms an elongated spine to which 2 to 4 L12 dimers bind in a sequential fashion. Binds GTP-bound translation factors.

Forms part of the ribosomal stalk which helps the ribosome interact with GTP-bound translation factors. Is thus essential for accurate translation. The polypeptide is Large ribosomal subunit protein bL12 (Laribacter hongkongensis (strain HLHK9)).